We begin with the raw amino-acid sequence, 329 residues long: DNA-directed RNA polymerase subunit alpha (329 aa).

The alpha N-terminal domain (alpha-NTD) stretch occupies residues 1–235 (MQGSVTEFLK…EQLDAFVDLR (235 aa)). The tract at residues 249-329 (FDPILLRPVD…NWPPASIAED (81 aa)) is alpha C-terminal domain (alpha-CTD).

It belongs to the RNA polymerase alpha chain family. As to quaternary structure, homodimer. The RNAP catalytic core consists of 2 alpha, 1 beta, 1 beta' and 1 omega subunit. When a sigma factor is associated with the core the holoenzyme is formed, which can initiate transcription.

It carries out the reaction RNA(n) + a ribonucleoside 5'-triphosphate = RNA(n+1) + diphosphate. Its function is as follows. DNA-dependent RNA polymerase catalyzes the transcription of DNA into RNA using the four ribonucleoside triphosphates as substrates. This is DNA-directed RNA polymerase subunit alpha from Actinobacillus succinogenes (strain ATCC 55618 / DSM 22257 / CCUG 43843 / 130Z).